Reading from the N-terminus, the 635-residue chain is Threonine--tRNA ligase (635 aa).

The editing domain stretch occupies residues 1–152 (MQLLLIHSDY…AKAAVKPEAA (152 aa)). The interval 215 to 514 (PHVELMRRLE…TEEGKVPMLP (300 aa)) is catalytic. Zn(2+)-binding residues include C307, H359, and H483.

Belongs to the class-II aminoacyl-tRNA synthetase family. Homodimer. Zn(2+) serves as cofactor.

Its subcellular location is the cytoplasm. It carries out the reaction tRNA(Thr) + L-threonine + ATP = L-threonyl-tRNA(Thr) + AMP + diphosphate + H(+). Its function is as follows. Catalyzes the attachment of threonine to tRNA(Thr) in a two-step reaction: L-threonine is first activated by ATP to form Thr-AMP and then transferred to the acceptor end of tRNA(Thr). Also edits incorrectly charged L-seryl-tRNA(Thr). This is Threonine--tRNA ligase from Methanosarcina acetivorans (strain ATCC 35395 / DSM 2834 / JCM 12185 / C2A).